A 224-amino-acid polypeptide reads, in one-letter code: Probable 2' cyclic ADP-D-ribose synthase BdTIR (224 aa).

In terms of domain architecture, TIR spans 51 to 178 (SRYEVFINHR…RFKFALREAK (128 aa)). NAD(+)-binding positions include 60–65 (RGVDTK) and Gly93. Residue Glu127 is part of the active site.

In terms of assembly, homodimer.

It catalyses the reaction NAD(+) + H2O = ADP-D-ribose + nicotinamide + H(+). It carries out the reaction NADP(+) + H2O = ADP-D-ribose 2'-phosphate + nicotinamide + H(+). The enzyme catalyses NAD(+) = 2'cADPR + nicotinamide + H(+). Functionally, an NAD(+) hydrolase (NADase). Upon activation catalyzes cleavage of NAD(+) into ADP-D-ribose (ADPR) and nicotinamide; NAD(+) cleavage triggers a defense system that promotes cell death. In addition to ADPR, also generates a cyclization variant of cyclic ADPR termed v-cADPR (2'cADPR). Also hydrolyzes NADP(+), but not other NAD(+)-related molecules. v-cADPR activates ThsA, an NAD(+) hydrolase in B.cereus (AC J8G6Z1). Probably makes 2'cADPR; the cADPR made by this protein is bound by cmTad1 (AC P0DW61) and activates ThsA from B.cereus. Boiling cmTad1 bound to the cyclic nucleotide releases 2'cADPR, strongly suggesting it is the product of this protein. In Brachypodium distachyon (Purple false brome), this protein is Probable 2' cyclic ADP-D-ribose synthase BdTIR.